The chain runs to 264 residues: [LysW]-aminoadipate/[LysW]-glutamate kinase (264 aa).

Substrate-binding positions include 35–36 (GG), arginine 62, and asparagine 167.

It belongs to the acetylglutamate kinase family. LysZ subfamily.

It is found in the cytoplasm. It catalyses the reaction [amino-group carrier protein]-C-terminal-N-(1,4-dicarboxybutan-1-yl)-L-glutamine + ATP = [amino-group carrier protein]-C-terminal-N-(1-carboxy-5-phosphooxy-5-oxopentan-1-yl)-L-glutamine + ADP. It carries out the reaction [amino-group carrier protein]-C-terminal-gamma-(L-glutamyl)-L-glutamate + ATP = [amino-group carrier protein]-C-terminal-gamma-(5-phospho-L-glutamyl)-L-glutamate + ADP. Its pathway is amino-acid biosynthesis; L-lysine biosynthesis via AAA pathway; L-lysine from L-alpha-aminoadipate (Thermus route): step 2/5. The protein operates within amino-acid biosynthesis; L-arginine biosynthesis. Involved in both the arginine and lysine biosynthetic pathways. Phosphorylates the LysW-bound precursors glutamate (for arginine biosynthesis), respectively alpha-aminoadipate (for lysine biosynthesis). The sequence is that of [LysW]-aminoadipate/[LysW]-glutamate kinase from Saccharolobus islandicus (strain Y.N.15.51 / Yellowstone #2) (Sulfolobus islandicus).